The following is a 448-amino-acid chain: Methionine aminopeptidase 2 (448 aa).

The segment at 1 to 94 (MAAQVTDALK…PRVLLSNLFP (94 aa)) is disordered. A compositionally biased stretch (acidic residues) spans 37–50 (AEAEDSDDDDEEPV). Positions 61–74 (KKKRKRKKKPKKKA) are enriched in basic residues. H201 is a binding site for substrate. A divalent metal cation-binding residues include D221, D232, and H301. H309 contacts substrate. The a divalent metal cation site is built by E334 and E429.

This sequence belongs to the peptidase M24A family. Methionine aminopeptidase eukaryotic type 2 subfamily. Co(2+) serves as cofactor. The cofactor is Zn(2+). Mn(2+) is required as a cofactor. Requires Fe(2+) as cofactor.

Its subcellular location is the cytoplasm. The enzyme catalyses Release of N-terminal amino acids, preferentially methionine, from peptides and arylamides.. Functionally, cotranslationally removes the N-terminal methionine from nascent proteins. The N-terminal methionine is often cleaved when the second residue in the primary sequence is small and uncharged (Met-Ala-, Cys, Gly, Pro, Ser, Thr, or Val). The sequence is that of Methionine aminopeptidase 2 from Botryotinia fuckeliana (strain B05.10) (Noble rot fungus).